The following is a 412-amino-acid chain: UDP-galactose transporter homolog 1 (412 aa).

A helical membrane pass occupies residues 3–23 (VLRLAVCISGVYAAFLLWAIA). The interval 31–51 (FPSVHPHPHQQPHSPSDPPPG) is disordered. A run of 4 helical transmembrane segments spans residues 58 to 78 (LFLNFAQALASSLSALCYLSF), 139 to 159 (LLALLVQVSVFQTIASPIGFL), 197 to 217 (YIVVALVTVGISMFMLFAETS), and 222 to 242 (GGSDSMWGLVLLLVNLLIDGL). The N-linked (GlcNAc...) asparagine glycan is linked to N244. A run of 4 helical transmembrane segments spans residues 262-282 (MMFTMALTTQIILLPLLVLPL), 325-345 (SALAPLFAYALLGGLGQLFIF), 355-375 (TLVMVTVTRKLFTMLLSVVVF), and 379-399 (LTKGQWLGVGVVFAGIGVEAG).

It belongs to the nucleotide-sugar transporter family. SLC35B subfamily.

The protein resides in the endoplasmic reticulum membrane. May be involved in specific transport of UDP-Gal from the cytosol to the Golgi lumen. Involved in the maintenance of optimal conditions for the folding of secretory pathway proteins in the endoplasmic reticulum. The protein is UDP-galactose transporter homolog 1 (HUT1-A) of Cryptococcus neoformans var. neoformans serotype D (strain JEC21 / ATCC MYA-565) (Filobasidiella neoformans).